The following is a 372-amino-acid chain: Anhydro-N-acetylmuramic acid kinase (372 aa).

18–25 provides a ligand contact to ATP; it reads GTSLDGID.

It belongs to the anhydro-N-acetylmuramic acid kinase family.

It catalyses the reaction 1,6-anhydro-N-acetyl-beta-muramate + ATP + H2O = N-acetyl-D-muramate 6-phosphate + ADP + H(+). It functions in the pathway amino-sugar metabolism; 1,6-anhydro-N-acetylmuramate degradation. The protein operates within cell wall biogenesis; peptidoglycan recycling. Functionally, catalyzes the specific phosphorylation of 1,6-anhydro-N-acetylmuramic acid (anhMurNAc) with the simultaneous cleavage of the 1,6-anhydro ring, generating MurNAc-6-P. Is required for the utilization of anhMurNAc either imported from the medium or derived from its own cell wall murein, and thus plays a role in cell wall recycling. This is Anhydro-N-acetylmuramic acid kinase from Thiobacillus denitrificans (strain ATCC 25259 / T1).